Consider the following 917-residue polypeptide: Auxin response factor 17 (917 aa).

Residues 134–236 (FCKTLTASDT…QLLLGIRRAN (103 aa)) constitute a DNA-binding region (TF-B3). Residues 571-649 (SVPNALSPFS…RPTAVPVPDP (79 aa)) are disordered. Composition is skewed to low complexity over residues 576-594 (LSPF…MTLQ) and 604-620 (SYPD…NTST). A PB1 domain is found at 786-870 (ATFVKVYKSG…SCIKILSPQE (85 aa)).

This sequence belongs to the ARF family. Homodimers and heterodimers. Expressed in roots, culms, leaves and young panicles.

The protein localises to the nucleus. Auxin response factors (ARFs) are transcriptional factors that bind specifically to the DNA sequence 5'-TGTCTC-3' found in the auxin-responsive promoter elements (AuxREs). The protein is Auxin response factor 17 (ARF17) of Oryza sativa subsp. japonica (Rice).